Reading from the N-terminus, the 840-residue chain is Protein translocase subunit SecA (840 aa).

ATP is bound by residues Gln85, 103 to 107 (GEGKT), and Asp492. The interval 787-822 (QRERVAKETGASHGGDSQEVKKKPVKKEPKVGRNDL) is disordered. A compositionally biased stretch (basic and acidic residues) spans 802-819 (DSQEVKKKPVKKEPKVGR). The Zn(2+) site is built by Cys823, Cys825, Cys834, and Cys835.

The protein belongs to the SecA family. As to quaternary structure, monomer and homodimer. Part of the essential Sec protein translocation apparatus which comprises SecA, SecYEG and auxiliary proteins SecDF. Other proteins may also be involved. The cofactor is Zn(2+).

It localises to the cell membrane. Its subcellular location is the cytoplasm. It catalyses the reaction ATP + H2O + cellular proteinSide 1 = ADP + phosphate + cellular proteinSide 2.. In terms of biological role, part of the Sec protein translocase complex. Interacts with the SecYEG preprotein conducting channel. Has a central role in coupling the hydrolysis of ATP to the transfer of proteins into and across the cell membrane, serving as an ATP-driven molecular motor driving the stepwise translocation of polypeptide chains across the membrane. This chain is Protein translocase subunit SecA, found in Clostridium perfringens (strain ATCC 13124 / DSM 756 / JCM 1290 / NCIMB 6125 / NCTC 8237 / Type A).